A 562-amino-acid polypeptide reads, in one-letter code: Beta-hexosaminidase (562 aa).

Residues 1–22 (MVLDKMIIFHLLLWLCNVVVHA) form the signal peptide. 7 N-linked (GlcNAc...) asparagine glycosylation sites follow: Asn-38, Asn-52, Asn-111, Asn-337, Asn-382, Asn-396, and Asn-463.

It belongs to the glycosyl hydrolase 20 family.

The catalysed reaction is Hydrolysis of terminal non-reducing N-acetyl-D-hexosamine residues in N-acetyl-beta-D-hexosaminides.. In terms of biological role, has a broad substrate specificity. The sequence is that of Beta-hexosaminidase (HEX1) from Candida albicans (Yeast).